The chain runs to 786 residues: Pentatricopeptide repeat-containing protein 10, chloroplastic (786 aa).

The interval 1-71 (MEATGRGLFP…HQTPTPPHSF (71 aa)) is disordered. The N-terminal 95 residues, 1-95 (MEATGRGLFP…HPLPTLAAFL (95 aa)), are a transit peptide targeting the chloroplast. Pro residues predominate over residues 27-36 (PAAPPPPSPS). Low complexity predominate over residues 37–50 (SLPLDSLLLHLTAP). PPR repeat units follow at residues 137–167 (DASA…TPLP), 173–207 (DVRA…GVAP), 208–243 (TLVT…GVEP), 244–278 (DGFT…GHAP), 279–313 (CVVT…GCQP), 314–348 (DAVT…GLLP), 349–383 (NAFT…GFVP), 384–418 (NVNT…GCTP), 419–453 (NRVT…GVEL), 454–488 (SRDT…GFTP), 489–523 (CITT…GFKP), 524–558 (NEQS…GAVF), 560–594 (SWVI…GYNP), 595–629 (DLVI…GLSP), 630–664 (DLIT…QTMK), 666–700 (DVVS…GMAP), 701–735 (CAVT…GLKP), and 736–770 (MELT…DLDF).

This sequence belongs to the PPR family. P subfamily. In terms of assembly, forms homodimers.

It is found in the plastid. It localises to the chloroplast stroma. In terms of biological role, involved in chloroplast mRNA stability. Binds specifically to two intergenic RNA regions of similar sequence located in the chloroplast atpH 5'-UTR and psaJ 3'-UTR, and serves as a barrier to RNA decay. Binding to a specific site in the intergenic region of the chloroplast atpH is sufficient to block 5'-3' and 3'-5' exonucleases. Acts as a protein barrier to block mRNA degradation by exonucleases, and defines processed mRNA termini in chloroplasts. Remodels the structure of the atpH ribosome-binding site in a manner that can account for its ability to enhance translation. Stabilizes a RNA 3'-end downstream from psaI. Binds atpH RNA as a monomer. The protein is Pentatricopeptide repeat-containing protein 10, chloroplastic of Zea mays (Maize).